The chain runs to 399 residues: Inositol polyphosphate 1-phosphatase (399 aa).

Residue Asp54 participates in Li(+) binding. Glu79 contributes to the Mg(2+) binding site. A Li(+)-binding site is contributed by Glu80. 2 residues coordinate Mg(2+): Asp153 and Ile155. 1D-myo-inositol 1,4-bisphosphate contacts are provided by Asp156, Ser157, Thr158, Ser267, Lys269, Gly289, Ala290, Lys293, and Thr311. Asp316 provides a ligand contact to Mg(2+). Ser317 carries the post-translational modification Phosphoserine.

This sequence belongs to the inositol monophosphatase superfamily. Monomer. It depends on Mg(2+) as a cofactor. In terms of tissue distribution, ubiquitously expressed, with highest levels in pancreas and kidney.

It catalyses the reaction 1D-myo-inositol 1,4-bisphosphate + H2O = 1D-myo-inositol 4-phosphate + phosphate. The catalysed reaction is 1D-myo-inositol 1,3,4-trisphosphate + H2O = 1D-myo-inositol 3,4-bisphosphate + phosphate. It functions in the pathway signal transduction; phosphatidylinositol signaling pathway. Inhibited by Li(+). Its function is as follows. Mg(2+)-dependent phosphatase that catalyzes the hydrolysis of the 1-position phosphate from inositol 1,4-bisphosphate and inositol 1,3,4-trisphosphate and participates in inositol phosphate metabolism. The chain is Inositol polyphosphate 1-phosphatase from Homo sapiens (Human).